An 848-amino-acid chain; its full sequence is Aryl hydrocarbon receptor (848 aa).

A propeptide spanning residues 1–9 (MSSGANITY) is cleaved from the precursor. Residues 1–38 (MSSGANITYASRKRRKPVQKTVKPIPAEGIKSNPSKRH) form a disordered region. 2 short sequence motifs (nuclear localization signal) span residues 12-15 (RKRR) and 36-41 (KRHRDR). Residues 26 to 79 (PAEGIKSNPSKRHRDRLNTELDRLASLLPFPQDVINKLDKLSVLRLSVSYLRAK) form the bHLH domain. Positions 37 to 65 (RHRDRLNTELDRLASLLPFPQDVINKLDK) are DNA-binding. 3 required for maintaining the overall integrity of the AHR:ARNT heterodimer and its transcriptional activity regions span residues 49 to 81 (LASL…AKSF), 116 to 124 (LLQALNGFV), and 260 to 262 (FAI). Residues 63 to 71 (LDKLSVLRL) carry the Nuclear export signal motif. Residues 111–175 (QEGEFLLQAL…AEFQRQLHWA (65 aa)) enclose the PAS 1 domain. The PAS 2 domain maps to 266–336 (LQPPSILEIR…CAESHIRMIK (71 aa)). The PAC domain occupies 342–383 (MTVFRLLAKHSRWRWVQSNARLIYRNGRPDYIIVTQRPLTDE). Positions 421–449 (LPIRTKSNTSRKDWAPQSTPSKDSFHPSS) are disordered. Residues 436 to 449 (PQSTPSKDSFHPSS) show a composition bias toward polar residues.

Homodimer. Heterodimer; efficient DNA binding requires dimerization with another bHLH protein. Interacts with ARNT; the heterodimer ARNT:AHR binds to core DNA sequence 5'-TGCGTG-3' within the dioxin response element (DRE) of target gene promoters and activates their transcription. Binds MYBBP1A. Interacts with coactivators including SRC-1, RIP140 and NOCA7, and with the corepressor SMRT. Interacts with NEDD8 and IVNS1ABP. Interacts with BMAL1. Interacts with HSP90AB1. Interacts with TIPARP; leading to mono-ADP-ribosylation of AHR and subsequent inhibition of AHR. In terms of processing, mono-ADP-ribosylated, leading to inhibit transcription activator activity of AHR.

It is found in the cytoplasm. The protein resides in the nucleus. In terms of biological role, ligand-activated transcription factor that enables cells to adapt to changing conditions by sensing compounds from the environment, diet, microbiome and cellular metabolism, and which plays important roles in development, immunity and cancer. Upon ligand binding, translocates into the nucleus, where it heterodimerizes with ARNT and induces transcription by binding to xenobiotic response elements (XRE). Regulates a variety of biological processes, including angiogenesis, hematopoiesis, drug and lipid metabolism, cell motility and immune modulation. Xenobiotics can act as ligands: upon xenobiotic-binding, activates the expression of multiple phase I and II xenobiotic chemical metabolizing enzyme genes (such as the CYP1A1 gene). Mediates biochemical and toxic effects of halogenated aromatic hydrocarbons. Next to xenobiotics, natural ligands derived from plants, microbiota, and endogenous metabolism are potent AHR agonists. Tryptophan (Trp) derivatives constitute an important class of endogenous AHR ligands. Acts as a negative regulator of anti-tumor immunity: indoles and kynurenic acid generated by Trp catabolism act as ligand and activate AHR, thereby promoting AHR-driven cancer cell motility and suppressing adaptive immunity. Regulates the circadian clock by inhibiting the basal and circadian expression of the core circadian component PER1. Inhibits PER1 by repressing the CLOCK-BMAL1 heterodimer mediated transcriptional activation of PER1. The heterodimer ARNT:AHR binds to core DNA sequence 5'-TGCGTG-3' within the dioxin response element (DRE) of target gene promoters and activates their transcription. This is Aryl hydrocarbon receptor (Ahr) from Mus musculus castaneus (Southeastern Asian house mouse).